A 409-amino-acid chain; its full sequence is Single Ig IL-1-related receptor (409 aa).

Residues 1–117 lie on the Extracellular side of the membrane; sequence MAGVCDMAPN…TLWRAGPAGH (117 aa). The Ig-like C2-type domain occupies 9 to 108; sequence PNFLSPSEDQ…VWNVSSHSFT (100 aa). Residues N31, N58, N73, N85, and N101 are each glycosylated (N-linked (GlcNAc...) asparagine). C32 and C97 are oxidised to a cystine. A helical; Signal-anchor for type III membrane protein transmembrane segment spans residues 118–138; sequence VAAVLASLLVLVVLLLVALLY. Over 139–409 the chain is Cytoplasmic; it reads VKCRLNMLLW…FYCLVSEDDV (271 aa). A TIR domain is found at 162-306; the sequence is KLYDAYVSYS…DFWKELQLAL (145 aa). Phosphoserine is present on S382.

It belongs to the interleukin-1 receptor family. Interacts with IL1R1, IRAK1, TLR4, TLR5, TLR9 and TRAF6. Upon IL-1 stimulation found in a complex at least composed of IL1R1, SIGIRR, MYD88, IRAK1 and TRAF6. Upon stimulation with LPC found in a complex at least composed of TLR4, SIG1IR, MYD88, IRAK1 and TRAF6. Interacts with PALM3. Expressed at high levels in kidney, and at moderate levels in colon, small intestine, lung, spleen and liver. Not expressed in brain and muscle. Expressed at high levels in epithelial cells, at moderate levels in splenocytes, and at low or undetectable levels in fibroblasts or endothelial cells. Expressed in mucosal and dendritic cells.

Its subcellular location is the membrane. Its function is as follows. Acts as a negative regulator of the Toll-like and IL-1R receptor signaling pathways. Attenuates the recruitment of receptor-proximal signaling components to the TLR4 receptor, probably through an TIR-TIR domain interaction with TLR4. Through its extracellular domain interferes with the heterodimerization of Il1R1 and IL1RAP. In Mus musculus (Mouse), this protein is Single Ig IL-1-related receptor (Sigirr).